A 111-amino-acid polypeptide reads, in one-letter code: X antigen family member 3 (111 aa).

The tract at residues 1 to 111 (MIWRGRSTYR…PEGGDRQPQV (111 aa)) is disordered. Residues 29–40 (PGDEEPQQEEPP) show a composition bias toward acidic residues. A compositionally biased stretch (basic and acidic residues) spans 97–111 (EQFKMPEGGDRQPQV).

The protein belongs to the GAGE family.

The polypeptide is X antigen family member 3 (XAGE3) (Homo sapiens (Human)).